A 292-amino-acid chain; its full sequence is MSRIPLGKVLLRNVIRHTDAHNKIQEESDMWKIRELEKQMEDAYRGTKRKMLPSSSSRMRSDGFDEESQRYYWRPKNEISGTLEDDFLKAKSWNKKFYDYEANMPDRWGHSGYKELYPEEFETDSDQQDITNGKKTSPQVKSSTHESRKHKKSKKSHKKKQKKRSHKKQKKSKKEATDITADSSSEFSEETGASGTRKGKQPHKRKKKSRKKSLKKPALFLEAESNTSHSDDSASSSSEESEERDTKKTKRKKREKKAHTSVANNEIQERTNKRTNWKVATDERSAESSEDD.

Residue Lys8 forms a Glycyl lysine isopeptide (Lys-Gly) (interchain with G-Cter in SUMO2) linkage. The tract at residues 47–67 (TKRKMLPSSSSRMRSDGFDEE) is disordered. Lys76 is covalently cross-linked (Glycyl lysine isopeptide (Lys-Gly) (interchain with G-Cter in SUMO2)). At Asn94 the chain carries Phosphothreonine. Phosphoserine occurs at positions 96 and 97. Residues 122 to 292 (ETDSDQQDIT…ERSAESSEDD (171 aa)) are disordered. Phosphothreonine is present on Thr123. A phosphoserine mark is found at Ser125 and Asp126. Residues 128–140 (QDITNGKKTSPQV) are compositionally biased toward polar residues. Residues 147 to 173 (SRKHKKSKKSHKKKQKKRSHKKQKKSK) show a composition bias toward basic residues. Positions 180 to 194 (TADSSSEFSEETGAS) are enriched in polar residues. Basic residues-rich tracts occupy residues 197-215 (RKGK…KSLK) and 247-259 (KKTK…KKAH). Basic and acidic residues predominate over residues 280 to 292 (ATDERSAESSEDD).

This is an uncharacterized protein from Homo sapiens (Human).